The chain runs to 407 residues: Peptidase T (407 aa).

His-82 contacts Zn(2+). Asp-84 is an active-site residue. Asp-143 provides a ligand contact to Zn(2+). Glu-177 functions as the Proton acceptor in the catalytic mechanism. 3 residues coordinate Zn(2+): Glu-178, Asp-200, and His-382.

The protein belongs to the peptidase M20B family. The cofactor is Zn(2+).

It is found in the cytoplasm. It catalyses the reaction Release of the N-terminal residue from a tripeptide.. Cleaves the N-terminal amino acid of tripeptides. The sequence is that of Peptidase T from Streptococcus pyogenes serotype M12 (strain MGAS2096).